Consider the following 95-residue polypeptide: Co-chaperonin GroES (95 aa).

The protein belongs to the GroES chaperonin family. Heptamer of 7 subunits arranged in a ring. Interacts with the chaperonin GroEL.

It is found in the cytoplasm. Its function is as follows. Together with the chaperonin GroEL, plays an essential role in assisting protein folding. The GroEL-GroES system forms a nano-cage that allows encapsulation of the non-native substrate proteins and provides a physical environment optimized to promote and accelerate protein folding. GroES binds to the apical surface of the GroEL ring, thereby capping the opening of the GroEL channel. The sequence is that of Co-chaperonin GroES from Jannaschia sp. (strain CCS1).